Reading from the N-terminus, the 544-residue chain is Tyrosine-protein kinase fynb (544 aa).

Residue Gly-2 is the site of N-myristoyl glycine attachment. S-palmitoyl cysteine attachment occurs at residues Cys-3 and Cys-6. In terms of domain architecture, SH3 spans 89–150 (TGVTLFVALY…PSNYVAPVDS (62 aa)). The 98-residue stretch at 156 to 253 (WYFGKLGRKD…GLCCRLVVPC (98 aa)) folds into the SH2 domain. The region spanning 278–531 (LQLIKRLGNG…YLQAFLEDYF (254 aa)) is the Protein kinase domain. Residues 284–292 (LGNGQFGEV) and Lys-306 each bind ATP. Catalysis depends on Asp-397, which acts as the Proton acceptor. Tyr-427 carries the phosphotyrosine; by autocatalysis modification. Residue Tyr-538 is modified to Phosphotyrosine.

It belongs to the protein kinase superfamily. Tyr protein kinase family. SRC subfamily. It depends on Mn(2+) as a cofactor.

The protein localises to the cytoplasm. It catalyses the reaction L-tyrosyl-[protein] + ATP = O-phospho-L-tyrosyl-[protein] + ADP + H(+). Inhibited by phosphorylation of Tyr-538 by leukocyte common antigen and activated by dephosphorylation of this site. Tyrosine-protein kinase implicated in the control of cell growth. Plays a role in the regulation of intracellular calcium levels. Required in brain development and mature brain function with important roles in the regulation of axon growth, axon guidance, and neurite extension. Role in CNTN1-mediated signaling. This is Tyrosine-protein kinase fynb (fynb) from Danio rerio (Zebrafish).